The primary structure comprises 141 residues: Hemoglobin subunit alpha (141 aa).

A Globin domain is found at 1-141; the sequence is VLSPADKKNV…VSTVLTSKYR (141 aa). Residue Ser-3 is modified to Phosphoserine. N6-succinyllysine is present on residues Lys-7 and Lys-11. Lys-16 carries the N6-acetyllysine; alternate modification. Lys-16 is modified (N6-succinyllysine; alternate). Phosphotyrosine is present on Tyr-24. Ser-35 carries the phosphoserine modification. Lys-40 carries the N6-succinyllysine modification. Ser-49 bears the Phosphoserine mark. His-58 is an O2 binding site. His-87 is a binding site for heme b. Ser-102 bears the Phosphoserine mark. Thr-108 is subject to Phosphothreonine. 2 positions are modified to phosphoserine: Ser-124 and Ser-131. Phosphothreonine occurs at positions 134 and 137. Phosphoserine is present on Ser-138.

Belongs to the globin family. Heterotetramer of two alpha chains and two beta chains. In terms of tissue distribution, red blood cells.

In terms of biological role, involved in oxygen transport from the lung to the various peripheral tissues. Functionally, hemopressin acts as an antagonist peptide of the cannabinoid receptor CNR1. Hemopressin-binding efficiently blocks cannabinoid receptor CNR1 and subsequent signaling. The polypeptide is Hemoglobin subunit alpha (HBA) (Spermophilus citellus (European ground squirrel)).